Reading from the N-terminus, the 347-residue chain is Protein NDL3 (347 aa).

The protein belongs to the NDRG family. As to quaternary structure, interacts with the heterodimers formed by GB1 and GG1, or GB1 and GG2. Interacts with RGS1.

It localises to the cytoplasm. Functionally, involved in a signaling pathway that modulates root auxin transport and auxin gradients. Acts partially by positively regulating the auxin carrier PIN2 and AUX1. Acts, together with GB1 as positive regulator of meristem initiation and branching. GB1 and NDL3 positively regulate basipetal inflorescence auxin transport and modulate MAX2 expression in shoots, which regulates organ and lateral meristem formation by the establishment and maintenance of auxin gradients. This Arabidopsis thaliana (Mouse-ear cress) protein is Protein NDL3.